The primary structure comprises 206 residues: Type III pantothenate kinase (206 aa).

D5 to K12 is a binding site for ATP. Residues Y67 and G72 to R75 contribute to the substrate site. The active-site Proton acceptor is the D74. K(+) is bound at residue D89. Residue S92 participates in ATP binding. Position 144 (T144) interacts with substrate.

This sequence belongs to the type III pantothenate kinase family. In terms of assembly, homodimer. NH4(+) is required as a cofactor. K(+) serves as cofactor.

It is found in the cytoplasm. The catalysed reaction is (R)-pantothenate + ATP = (R)-4'-phosphopantothenate + ADP + H(+). Its pathway is cofactor biosynthesis; coenzyme A biosynthesis; CoA from (R)-pantothenate: step 1/5. Functionally, catalyzes the phosphorylation of pantothenate (Pan), the first step in CoA biosynthesis. The sequence is that of Type III pantothenate kinase from Campylobacter hominis (strain ATCC BAA-381 / DSM 21671 / CCUG 45161 / LMG 19568 / NCTC 13146 / CH001A).